A 397-amino-acid polypeptide reads, in one-letter code: Cysteine protease ATG4A (397 aa).

The active-site Nucleophile is the Cys-79. Catalysis depends on residues Asp-279 and His-281. Positions 392–395 (FEIL) match the LIR motif.

It belongs to the peptidase C54 family.

The protein localises to the cytoplasm. The catalysed reaction is [protein]-C-terminal L-amino acid-glycyl-phosphatidylethanolamide + H2O = [protein]-C-terminal L-amino acid-glycine + a 1,2-diacyl-sn-glycero-3-phosphoethanolamine. Functionally, cysteine protease that plays a key role in autophagy by mediating both proteolytic activation and delipidation of ATG8 family proteins. The protease activity is required for proteolytic activation of ATG8 family proteins: cleaves the C-terminal amino acid of ATG8 proteins to reveal a C-terminal glycine. Exposure of the glycine at the C-terminus is essential for ATG8 proteins conjugation to phosphatidylethanolamine (PE) and insertion to membranes, which is necessary for autophagy. Protease activity is also required to counteract formation of high-molecular weight conjugates of ATG8 proteins (ATG8ylation): acts as a deubiquitinating-like enzyme that removes ATG8 conjugated to other proteins, such as ATG3. In addition to the protease activity, also mediates delipidation of ATG8 family proteins. Catalyzes delipidation of PE-conjugated forms of ATG8 proteins during macroautophagy. The chain is Cysteine protease ATG4A from Xenopus laevis (African clawed frog).